A 592-amino-acid chain; its full sequence is Proteasome-associated ATPase (592 aa).

The segment covering 1–11 has biased composition (acidic residues); the sequence is MTGYDSSEEAE. Positions 1–24 are disordered; sequence MTGYDSSEEAERDSSPADGYRQTP. The stretch at 25 to 99 forms a coiled coil; the sequence is AQLSAQIRVL…LKEEVDRLAQ (75 aa). 281–286 is a binding site for ATP; the sequence is GCGKTL. Residues 591 to 592 are docks into pockets in the proteasome alpha-ring; the sequence is YL.

The protein belongs to the AAA ATPase family. As to quaternary structure, homohexamer. Assembles into a hexameric ring structure that caps the 20S proteasome core. Strongly interacts with the prokaryotic ubiquitin-like protein Pup through a hydrophobic interface; the interacting region of ARC lies in its N-terminal coiled-coil domain. There is one Pup binding site per ARC hexamer ring. Upon ATP-binding, the C-terminus of ARC interacts with the alpha-rings of the proteasome core, possibly by binding to the intersubunit pockets.

It participates in protein degradation; proteasomal Pup-dependent pathway. Its function is as follows. ATPase which is responsible for recognizing, binding, unfolding and translocation of pupylated proteins into the bacterial 20S proteasome core particle. May be essential for opening the gate of the 20S proteasome via an interaction with its C-terminus, thereby allowing substrate entry and access to the site of proteolysis. Thus, the C-termini of the proteasomal ATPase may function like a 'key in a lock' to induce gate opening and therefore regulate proteolysis. In Nakamurella multipartita (strain ATCC 700099 / DSM 44233 / CIP 104796 / JCM 9543 / NBRC 105858 / Y-104) (Microsphaera multipartita), this protein is Proteasome-associated ATPase.